A 654-amino-acid polypeptide reads, in one-letter code: Probable Xaa-Pro aminopeptidase P (654 aa).

Mn(2+) is bound by residues Asp449, Asp460, Glu558, and Glu572.

The protein belongs to the peptidase M24B family. Requires Mn(2+) as cofactor.

It catalyses the reaction Release of any N-terminal amino acid, including proline, that is linked to proline, even from a dipeptide or tripeptide.. Catalyzes the removal of a penultimate prolyl residue from the N-termini of peptides. The polypeptide is Probable Xaa-Pro aminopeptidase P (ampp) (Neosartorya fischeri (strain ATCC 1020 / DSM 3700 / CBS 544.65 / FGSC A1164 / JCM 1740 / NRRL 181 / WB 181) (Aspergillus fischerianus)).